The sequence spans 107 residues: UPF0145 protein Spro_1658 (107 aa).

Belongs to the UPF0145 family.

In Serratia proteamaculans (strain 568), this protein is UPF0145 protein Spro_1658.